The primary structure comprises 212 residues: Thymidylate kinase (212 aa).

Glycine 11–serine 18 is an ATP binding site.

It belongs to the thymidylate kinase family.

It carries out the reaction dTMP + ATP = dTDP + ADP. Phosphorylation of dTMP to form dTDP in both de novo and salvage pathways of dTTP synthesis. This chain is Thymidylate kinase, found in Vibrio vulnificus (strain CMCP6).